The following is a 450-amino-acid chain: uncharacterized protein (450 aa).

A TRAM domain is found at 1–58; it reads MAKGEIVTVKIEEMDFKGYGVGYCEGKPLKVRGGILGQRVAVRVKKGKKGRAEGEIVE. 4 residues coordinate [4Fe-4S] cluster: C71, C77, C80, and C159. S-adenosyl-L-methionine-binding residues include Q285, Y314, E335, and D380. C407 functions as the Nucleophile in the catalytic mechanism.

The protein belongs to the class I-like SAM-binding methyltransferase superfamily. RNA M5U methyltransferase family.

This is an uncharacterized protein from Caldanaerobacter subterraneus subsp. tengcongensis (strain DSM 15242 / JCM 11007 / NBRC 100824 / MB4) (Thermoanaerobacter tengcongensis).